The sequence spans 500 residues: NAD(P)H-quinone oxidoreductase chain 4, chloroplastic (500 aa).

14 helical membrane passes run 4–24 (FPWL…MLFL), 35–55 (YTIC…CYNF), 87–107 (IGTI…AFPV), 113–130 (LFHF…GSFS), 134–154 (LLLF…LLAM), 167–187 (FILY…GLSL), 211–231 (ILFY…IPLH), 242–262 (HYST…YGLV), 272–292 (AHSM…IYAA), 305–325 (IAYS…SITD), 330–350 (GAIL…FLAG), 386–406 (LALP…GIIT), 416–436 (ILII…LLSM), and 462–482 (LFLS…PDFV).

Belongs to the complex I subunit 4 family.

The protein resides in the plastid. It is found in the chloroplast thylakoid membrane. It carries out the reaction a plastoquinone + NADH + (n+1) H(+)(in) = a plastoquinol + NAD(+) + n H(+)(out). It catalyses the reaction a plastoquinone + NADPH + (n+1) H(+)(in) = a plastoquinol + NADP(+) + n H(+)(out). The polypeptide is NAD(P)H-quinone oxidoreductase chain 4, chloroplastic (Lepidium virginicum (Virginia pepperweed)).